A 76-amino-acid polypeptide reads, in one-letter code: cAMP-dependent protein kinase inhibitor alpha (76 aa).

Residue Thr-2 is modified to N-acetylthreonine. Residues 49 to 76 (KTEGEDDGQRSSTEQSGEAQGEAAKSES) form a disordered region.

The protein belongs to the PKI family. As to expression, present at high levels in skeletal muscle and brain but is present at lower levels in heart, testis and liver.

Functionally, extremely potent competitive inhibitor of cAMP-dependent protein kinase activity, this protein interacts with the catalytic subunit of the enzyme after the cAMP-induced dissociation of its regulatory chains. The sequence is that of cAMP-dependent protein kinase inhibitor alpha (Pkia) from Mus musculus (Mouse).